The sequence spans 499 residues: Replication factor C large subunit (499 aa).

Position 50-57 (glycine 50–threonine 57) interacts with ATP. The disordered stretch occupies residues glutamate 428–lysine 499. Over residues alanine 436 to glutamate 472 the composition is skewed to acidic residues. Positions threonine 473–lysine 484 are enriched in basic and acidic residues.

Belongs to the activator 1 small subunits family. RfcL subfamily. Heteromultimer composed of small subunits (RfcS) and large subunits (RfcL).

Part of the RFC clamp loader complex which loads the PCNA sliding clamp onto DNA. In Thermococcus kodakarensis (strain ATCC BAA-918 / JCM 12380 / KOD1) (Pyrococcus kodakaraensis (strain KOD1)), this protein is Replication factor C large subunit.